The chain runs to 474 residues: Cyclin-dependent kinase 18 (474 aa).

Residues Ser-14, Ser-74, Ser-89, Ser-98, Ser-117, and Ser-132 each carry the phosphoserine modification. Positions 44 to 87 (DLQLGPLGRDPLQECSTFSPTDSGEEPGQLSPGVQFQRRQNQRR) are disordered. Residues 144–425 (YVKLDKLGEG…AEAALSHPYF (282 aa)) enclose the Protein kinase domain. ATP contacts are provided by residues 150–158 (LGEGTYATV) and Lys-173. The active-site Proton acceptor is the Asp-265. Residues Ser-440 and Ser-443 each carry the phosphoserine modification.

The protein belongs to the protein kinase superfamily. CMGC Ser/Thr protein kinase family. CDC2/CDKX subfamily.

It catalyses the reaction L-seryl-[protein] + ATP = O-phospho-L-seryl-[protein] + ADP + H(+). The catalysed reaction is L-threonyl-[protein] + ATP = O-phospho-L-threonyl-[protein] + ADP + H(+). Its function is as follows. May play a role in signal transduction cascades in terminally differentiated cells. The chain is Cyclin-dependent kinase 18 (CDK18) from Pongo abelii (Sumatran orangutan).